Here is a 370-residue protein sequence, read N- to C-terminus: WAT1-related protein At1g44800 (370 aa).

Transmembrane regions (helical) follow at residues 11 to 31 (PILAIISLQFGYAGMYIITMV), 41 to 61 (VLATYRHVVATVVMAPFALMF), 67 to 87 (PKMTLAIFWRLLALGILEPLM), 102 to 122 (SYTSAFTNALPAVTFILALIF), 142 to 162 (VITVGGAMIMTLYKGPAIEIV), 182 to 202 (WVLGTIAIMGSISTWAAFFIL), 216 to 236 (LVTLICGIGTILNAIASLIMV), 252 to 272 (AAVYSGVVCSGIAYYIQSIVI), 278 to 298 (VFTTSFSPMCMIITAFLGALV), and 303 to 323 (IHLGSIIGAVFIVLGLYSVVW). 2 consecutive EamA domains span residues 23–143 (AGMY…GTVI) and 195–322 (TWAA…YSVV).

Belongs to the drug/metabolite transporter (DMT) superfamily. Plant drug/metabolite exporter (P-DME) (TC 2.A.7.4) family.

The protein localises to the membrane. This is WAT1-related protein At1g44800 from Arabidopsis thaliana (Mouse-ear cress).